A 188-amino-acid polypeptide reads, in one-letter code: Pterocarpan synthase 1 (188 aa).

An N-terminal signal peptide occupies residues 1–23; it reads MAKSTTFFISLTLPFLLLSVVTA. The N-linked (GlcNAc...) asparagine glycan is linked to Asn-127.

It belongs to the plant dirigent protein family. In terms of assembly, homodimer.

Its subcellular location is the secreted. The protein localises to the extracellular space. It is found in the apoplast. The catalysed reaction is a (4R)-4,2'-dihydroxyisoflavan = a pterocarpan + H2O.. It carries out the reaction (3R,4R)-7,2'-dihydroxy-4'-methoxyisoflavanol = (-)-medicarpin + H2O. The enzyme catalyses (3S,4R)-7,2'-dihydroxy-4'-methoxyisoflavanol = (+)-medicarpin + H2O. It catalyses the reaction (3R,4R)-3-(6-hydroxy-1,3-benzodioxol-5-yl)-3,4-dihydro-2H-chromene-4,7-diol = (-)-maackiain + H2O. The catalysed reaction is (3R,4R)-7,2',4'-trihydroxyisoflavanol = (6aR,11aR)-3,9-dihydroxypterocarpan + H2O. In terms of biological role, involved in pterocarpan phytoalexin biosynthesis. Catalyzes the last step in the biosynthesis of the phytoalexin medicarpin, and thereby contributes to plant defense reactions. Dirigent proteins impart stereoselectivity on the phenoxy radical-coupling reaction, yielding optically active lignans from two molecules of coniferyl alcohol in the biosynthesis of lignans, flavonolignans, and alkaloids and thus plays a central role in plant secondary metabolism. The polypeptide is Pterocarpan synthase 1 (Glycyrrhiza echinata (Licorice)).